Here is an 81-residue protein sequence, read N- to C-terminus: RNA-binding protein KhpA (81 aa).

A KH domain is found at 34–81; sequence KIALRLSVHKSDTGKVIGKQGRTAKAIRTAVFAAGVQSSKKVQFEIFD.

It belongs to the KhpA RNA-binding protein family. As to quaternary structure, forms a complex with KhpB.

The protein localises to the cytoplasm. In terms of biological role, a probable RNA chaperone. Forms a complex with KhpB which binds to cellular RNA and controls its expression. Plays a role in peptidoglycan (PG) homeostasis and cell length regulation. This is RNA-binding protein KhpA from Bacillus subtilis (strain 168).